A 91-amino-acid polypeptide reads, in one-letter code: Cytochrome b-c1 complex subunit 10, mitochondrial (91 aa).

The Mitochondrial matrix segment spans residues 1 to 34 (MFATSILRSAYPAYKSPYGPKYQYQPHIDGITPK). A helical transmembrane segment spans residues 35-58 (QLVRILPTAAAWTGVALFAVVYYA). The Mitochondrial intermembrane portion of the chain corresponds to 59–91 (SGIPRLRRDVLQRIPYLGERYFVNEIPASDNPF).

This sequence belongs to the UQCR11/QCR10 family. In terms of assembly, component of the ubiquinol-cytochrome c oxidoreductase (cytochrome b-c1 complex, complex III, CIII), a multisubunit enzyme composed of 10 subunits. The complex is composed of 3 respiratory subunits cytochrome b (cob), cytochrome c1 (cyt-1) and Rieske protein (fes-1), 2 core protein subunits pep and ucr-1, and 5 low-molecular weight protein subunits qcr6, qcr7, qcr8, qcr9 and probably NCU16844/qcr10. The complex exists as an obligatory dimer and forms supercomplexes (SCs) in the inner mitochondrial membrane with NADH-ubiquinone oxidoreductase (complex I, CI) and cytochrome c oxidase (complex IV, CIV), resulting in different assemblies (supercomplexes SCI(1)III(2), SCIII(2)IV(1) and SCIII(2)IV(2) as well as higher order I(x)III(y)IV(z) megacomplexes).

Its subcellular location is the mitochondrion inner membrane. Component of the ubiquinol-cytochrome c oxidoreductase, a multisubunit transmembrane complex that is part of the mitochondrial electron transport chain which drives oxidative phosphorylation. The respiratory chain contains 3 multisubunit complexes succinate dehydrogenase (complex II, CII), ubiquinol-cytochrome c oxidoreductase (cytochrome b-c1 complex, complex III, CIII) and cytochrome c oxidase (complex IV, CIV), that cooperate to transfer electrons derived from NADH and succinate to molecular oxygen, creating an electrochemical gradient over the inner membrane that drives transmembrane transport and the ATP synthase. The cytochrome b-c1 complex catalyzes electron transfer from ubiquinol to cytochrome c, linking this redox reaction to translocation of protons across the mitochondrial inner membrane, with protons being carried across the membrane as hydrogens on the quinol. In the process called Q cycle, 2 protons are consumed from the matrix, 4 protons are released into the intermembrane space and 2 electrons are passed to cytochrome c. This Neurospora crassa (strain ATCC 24698 / 74-OR23-1A / CBS 708.71 / DSM 1257 / FGSC 987) protein is Cytochrome b-c1 complex subunit 10, mitochondrial.